Consider the following 1595-residue polypeptide: A disintegrin and metalloproteinase with thrombospondin motifs 7 (1595 aa).

Positions 1–20 (MHRGLNLLLILCALAPHVLG) are cleaved as a signal peptide. A propeptide spanning residues 21–217 (PASGLPTEGR…QRQQKRRQQR (197 aa)) is cleaved from the precursor. N-linked (GlcNAc...) asparagine glycosylation is found at Asn-84 and Asn-105. The disordered stretch occupies residues 165–218 (PGHAQPHMVYKHKRSGQQDDSRTSGTCGVQGSPELKHQREHWEQRQQKRRQQRS). The short motif at 189 to 196 (GTCGVQGS) is the Cysteine switch element. Cys-191 lines the Zn(2+) pocket. Over residues 198–210 (ELKHQREHWEQRQ) the composition is skewed to basic and acidic residues. Residues 223–434 (KWVETLVVAD…GWGLCLDDRP (212 aa)) form the Peptidase M12B domain. 11 disulfides stabilise this stretch: Cys-299/Cys-353, Cys-328/Cys-335, Cys-347/Cys-429, Cys-386/Cys-413, Cys-456/Cys-479, Cys-467/Cys-485, Cys-474/Cys-504, Cys-498/Cys-509, Cys-532/Cys-569, Cys-536/Cys-574, and Cys-547/Cys-559. A Zn(2+)-binding site is contributed by His-369. Residue Glu-370 is part of the active site. 2 residues coordinate Zn(2+): His-373 and His-379. In terms of domain architecture, Disintegrin spans 444-519 (VLPGVLYDVN…VPEGFQPETV (76 aa)). The TSP type-1 1 domain occupies 520–575 (DGGWSGWSAWSVCSRSCGVGVRSSERQCTQPVPKNKGKYCVGERKRYRLCNLQACP). A glycan (N-linked (GlcNAc...) asparagine) is linked at Asn-619. The interval 680 to 791 (HTVSRTFKEA…PGVHYKYTIQ (112 aa)) is spacer. 3 consecutive TSP type-1 domains span residues 801–860 (PEFS…EPCP), 861–917 (ARWW…IPCY), and 922–975 (CPSS…QPCQ). Disordered stretches follow at residues 989–1035 (GSSS…LDPP), 1077–1121 (PPHI…SHSP), 1179–1234 (REDT…LSPD), and 1255–1315 (KPVH…APTD). 2 stretches are compositionally biased toward pro residues: residues 1005–1015 (QPVPRPSPASS) and 1079–1089 (HIRPTEPPSDS). Residues 1220–1232 (SSPSNSTTQASLS) show a composition bias toward low complexity. Positions 1268-1280 (QIQTPHTEGTQSP) are enriched in polar residues. TSP type-1 domains are found at residues 1320 to 1368 (KNAS…RHCH), 1371 to 1431 (PCAA…QPCL), 1433 to 1476 (WYTS…PCNT), and 1478 to 1538 (PCTQ…EDCE). One can recognise a PLAC domain in the interval 1541–1581 (EPSRCERDRLPFNFCETLRLLGRCQLPTIRAQCCRSCPPLS).

Interacts with COMP. Zn(2+) serves as cofactor. Glycosylated. Can be O-fucosylated by POFUT2 on a serine or a threonine residue found within the consensus sequence C1-X(2)-(S/T)-C2-G of the TSP type-1 repeat domains where C1 and C2 are the first and second cysteine residue of the repeat, respectively. Fucosylated repeats can then be further glycosylated by the addition of a beta-1,3-glucose residue by the glucosyltransferase, B3GALTL. Fucosylation mediates the efficient secretion of ADAMTS family members. Can also be C-glycosylated with one or two mannose molecules on tryptophan residues within the consensus sequence W-X-X-W of the TPRs. N- and C-glycosylations can also facilitate secretion. In terms of processing, O-glycosylated proteoglycan; contains chondroitin sulfate. Post-translationally, may be cleaved by a furin endopeptidase. The precursor is sequentially processed. As to expression, detected in liver, ovary, kidney, testicle, lung and embryo.

The protein localises to the secreted. Its subcellular location is the extracellular space. It is found in the extracellular matrix. Metalloprotease. Was previously shown to degrade COMP. However, a later study found no activity against COMP. This chain is A disintegrin and metalloproteinase with thrombospondin motifs 7 (Adamts7), found in Rattus norvegicus (Rat).